Reading from the N-terminus, the 100-residue chain is Large ribosomal subunit protein uL23 (100 aa).

The protein belongs to the universal ribosomal protein uL23 family. In terms of assembly, part of the 50S ribosomal subunit. Contacts protein L29, and trigger factor when it is bound to the ribosome.

One of the early assembly proteins it binds 23S rRNA. One of the proteins that surrounds the polypeptide exit tunnel on the outside of the ribosome. Forms the main docking site for trigger factor binding to the ribosome. This is Large ribosomal subunit protein uL23 from Lactobacillus acidophilus (strain ATCC 700396 / NCK56 / N2 / NCFM).